We begin with the raw amino-acid sequence, 308 residues long: Ectoine dioxygenase (308 aa).

Residue Gln-131 coordinates L-ectoine. Residue Lys-137 coordinates 2-oxoglutarate. Positions 148, 150, and 249 each coordinate Fe cation.

The protein belongs to the PhyH family. EctD subfamily. As to quaternary structure, homodimer. Fe(2+) serves as cofactor.

The catalysed reaction is L-ectoine + 2-oxoglutarate + O2 = 5-hydroxyectoine + succinate + CO2. Its function is as follows. Involved in the biosynthesis of 5-hydroxyectoine, called compatible solute, which helps organisms to survive extreme osmotic stress by acting as a highly soluble organic osmolyte. Catalyzes the 2-oxoglutarate-dependent selective hydroxylation of L-ectoine to yield (4S,5S)-5-hydroxyectoine. This Bordetella bronchiseptica (strain ATCC BAA-588 / NCTC 13252 / RB50) (Alcaligenes bronchisepticus) protein is Ectoine dioxygenase.